Consider the following 160-residue polypeptide: Myosin regulatory light chain, smooth muscle (160 aa).

S1 is subject to Blocked amino end (Ser). At S11 the chain carries Phosphoserine. 2 EF-hand domains span residues 20–55 (NQIQ…LGTA) and 88–123 (DPEE…MGDN). Ca(2+) is bound by residues D33, N35, D37, and D44.

Functionally, in molluscan muscle, calcium regulation is associated with myosin rather than with actin. Muscle myosin contains two types of light chains: the catalytic light chain, essential for ATPase activity, and the regulatory light chain, a calcium-binding protein responsible for Ca(2+) dependent binding and Ca(2+) dependent Mg-ATPase activity. This Spisula sachalinensis (Sakhalin surf-clam) protein is Myosin regulatory light chain, smooth muscle.